The chain runs to 261 residues: Cytochrome c oxidase subunit 3 (261 aa).

At 1-15 (MTHQTHAYHMVNPSP) the chain is on the mitochondrial matrix side. The chain crosses the membrane as a helical span at residues 16 to 34 (WPLTGALSALLMTSGLIMW). Residues 35–40 (FHFNST) lie on the Mitochondrial intermembrane side of the membrane. The chain crosses the membrane as a helical span at residues 41-66 (ALLMLGLTTNMLTMYQWWRDIIREST). The Mitochondrial matrix portion of the chain corresponds to 67–72 (FQGHHT). A helical transmembrane segment spans residues 73–105 (PVVQKGLRYGMILFIISEVLFFTGFFWAFYHSS). At 106-128 (LAPTPELGGCWPPTGINPLNPLE) the chain is on the mitochondrial intermembrane side. Residues 129 to 152 (VPLLNTSVLLASGVSITWAHHSLM) form a helical membrane-spanning segment. Over 153–155 (EGN) the chain is Mitochondrial matrix. The chain crosses the membrane as a helical span at residues 156–183 (RSHMLQALFITITLGVYFTLLQASEYYE). Topologically, residues 184–190 (APFTISD) are mitochondrial intermembrane. Residues 191-223 (GVYGSTFFVATGFHGLHVIIGSTFLIVCFFRQL) traverse the membrane as a helical segment. Topologically, residues 224–232 (KFHFTSNHH) are mitochondrial matrix. The chain crosses the membrane as a helical span at residues 233 to 256 (FGFEAAAWYWHFVDVVWLFLYVSI). At 257–261 (YWWGS) the chain is on the mitochondrial intermembrane side.

This sequence belongs to the cytochrome c oxidase subunit 3 family. Component of the cytochrome c oxidase (complex IV, CIV), a multisubunit enzyme composed of 14 subunits. The complex is composed of a catalytic core of 3 subunits MT-CO1, MT-CO2 and MT-CO3, encoded in the mitochondrial DNA, and 11 supernumerary subunits COX4I, COX5A, COX5B, COX6A, COX6B, COX6C, COX7A, COX7B, COX7C, COX8 and NDUFA4, which are encoded in the nuclear genome. The complex exists as a monomer or a dimer and forms supercomplexes (SCs) in the inner mitochondrial membrane with NADH-ubiquinone oxidoreductase (complex I, CI) and ubiquinol-cytochrome c oxidoreductase (cytochrome b-c1 complex, complex III, CIII), resulting in different assemblies (supercomplex SCI(1)III(2)IV(1) and megacomplex MCI(2)III(2)IV(2)).

Its subcellular location is the mitochondrion inner membrane. The enzyme catalyses 4 Fe(II)-[cytochrome c] + O2 + 8 H(+)(in) = 4 Fe(III)-[cytochrome c] + 2 H2O + 4 H(+)(out). In terms of biological role, component of the cytochrome c oxidase, the last enzyme in the mitochondrial electron transport chain which drives oxidative phosphorylation. The respiratory chain contains 3 multisubunit complexes succinate dehydrogenase (complex II, CII), ubiquinol-cytochrome c oxidoreductase (cytochrome b-c1 complex, complex III, CIII) and cytochrome c oxidase (complex IV, CIV), that cooperate to transfer electrons derived from NADH and succinate to molecular oxygen, creating an electrochemical gradient over the inner membrane that drives transmembrane transport and the ATP synthase. Cytochrome c oxidase is the component of the respiratory chain that catalyzes the reduction of oxygen to water. Electrons originating from reduced cytochrome c in the intermembrane space (IMS) are transferred via the dinuclear copper A center (CU(A)) of subunit 2 and heme A of subunit 1 to the active site in subunit 1, a binuclear center (BNC) formed by heme A3 and copper B (CU(B)). The BNC reduces molecular oxygen to 2 water molecules using 4 electrons from cytochrome c in the IMS and 4 protons from the mitochondrial matrix. The polypeptide is Cytochrome c oxidase subunit 3 (MT-CO3) (Syncerus caffer (African buffalo)).